A 591-amino-acid chain; its full sequence is Speriolin (591 aa).

Residues 1-42 (MSLLTNYEGLRHQIERLVRENEELKKLVRLIRENHELKSAIK) adopt a coiled-coil conformation. Positions 1–78 (MSLLTNYEGL…NNGVFLPPSP (78 aa)) are necessary for targeting centrosomes. A compositionally biased stretch (polar residues) spans 302-314 (NTSDTQAQPSAAQ). 2 disordered regions span residues 302–331 (NTSDTQAQPSAAQEQVVPASVPTSPTTSPT) and 346–435 (ATSY…ENPR). The segment covering 317–331 (VVPASVPTSPTTSPT) has biased composition (low complexity). Polar residues-rich tracts occupy residues 346–357 (ATSYTPSSTTHI) and 390–401 (PRTSSSPASVND).

It belongs to the speriolin family. In terms of assembly, found in a complex with CDC20, CDC27 and TUBG1. Interacts with CDC20. Detected only in testis.

The protein resides in the cytoplasm. Its subcellular location is the cytoskeleton. The protein localises to the microtubule organizing center. It localises to the centrosome. This Homo sapiens (Human) protein is Speriolin (SPATC1).